The chain runs to 257 residues: Photosystem I chlorophyll a/b-binding protein 2, chloroplastic (257 aa).

Residues 1-43 constitute a chloroplast transit peptide; the sequence is MASSLCASSAIAAISSPSFLGGKKLRLKKKLTVPAVSRPDASV. A chlorophyll b-binding site is contributed by Trp-55. 3 residues coordinate chlorophyll a: Phe-75, Ser-81, and Glu-94. Arg-99 contacts chlorophyll b. The next 2 helical transmembrane spans lie at 100–120 and 133–153; these read WAML…IGIL and YFTD…WAEG. Residues Glu-152 and Arg-155 each coordinate chlorophyll b. Positions 208, 209, 212, 214, 226, and 241 each coordinate chlorophyll a. Residues 215–235 traverse the membrane as a helical segment; it reads LAMLAVMGAWFQHIYTGTGPI.

It belongs to the light-harvesting chlorophyll a/b-binding (LHC) protein family. In terms of assembly, the LHC complex consists of chlorophyll a-b binding proteins. Red-emitting heterodimers with LHCA3 and LHCA5. Binds to carotenoids. Requires Binds at least 14 chlorophylls (8 Chl-a and 6 Chl-b) and carotenoids such as lutein and neoxanthin. as cofactor. Photoregulated by reversible phosphorylation of its threonine residues.

It localises to the plastid. The protein localises to the chloroplast thylakoid membrane. The light-harvesting complex (LHC) functions as a light receptor, it captures and delivers excitation energy to photosystems with which it is closely associated, here photosystem I. This Arabidopsis thaliana (Mouse-ear cress) protein is Photosystem I chlorophyll a/b-binding protein 2, chloroplastic.